The sequence spans 377 residues: Queuine tRNA-ribosyltransferase (377 aa).

The active-site Proton acceptor is Asp-92. Residues 92 to 96 (DSGGF), Asp-146, Gln-190, and Gly-217 contribute to the substrate site. The interval 248–254 (GVGRPED) is RNA binding. Asp-267 functions as the Nucleophile in the catalytic mechanism. An RNA binding; important for wobble base 34 recognition region spans residues 272–276 (TRHAR). Cys-305, Cys-307, Cys-310, and His-337 together coordinate Zn(2+).

This sequence belongs to the queuine tRNA-ribosyltransferase family. As to quaternary structure, homodimer. Within each dimer, one monomer is responsible for RNA recognition and catalysis, while the other monomer binds to the replacement base PreQ1. Requires Zn(2+) as cofactor.

The enzyme catalyses 7-aminomethyl-7-carbaguanine + guanosine(34) in tRNA = 7-aminomethyl-7-carbaguanosine(34) in tRNA + guanine. Its pathway is tRNA modification; tRNA-queuosine biosynthesis. In terms of biological role, catalyzes the base-exchange of a guanine (G) residue with the queuine precursor 7-aminomethyl-7-deazaguanine (PreQ1) at position 34 (anticodon wobble position) in tRNAs with GU(N) anticodons (tRNA-Asp, -Asn, -His and -Tyr). Catalysis occurs through a double-displacement mechanism. The nucleophile active site attacks the C1' of nucleotide 34 to detach the guanine base from the RNA, forming a covalent enzyme-RNA intermediate. The proton acceptor active site deprotonates the incoming PreQ1, allowing a nucleophilic attack on the C1' of the ribose to form the product. After dissociation, two additional enzymatic reactions on the tRNA convert PreQ1 to queuine (Q), resulting in the hypermodified nucleoside queuosine (7-(((4,5-cis-dihydroxy-2-cyclopenten-1-yl)amino)methyl)-7-deazaguanosine). In Xylella fastidiosa (strain Temecula1 / ATCC 700964), this protein is Queuine tRNA-ribosyltransferase.